We begin with the raw amino-acid sequence, 452 residues long: Elongation factor Tu, mitochondrial (452 aa).

Residues 1–43 (MAAATLLRATPRFSGLCASPTPFLQGRLRPLKAPASPFLCRGL) constitute a mitochondrion transit peptide. In terms of domain architecture, tr-type G spans 55–251 (KPHVNVGTIG…AVDTYIPVPT (197 aa)). A G1 region spans residues 64-71 (GHVDHGKT). Aspartate 67, glycine 69, lysine 70, threonine 71, and threonine 72 together coordinate GTP. Residue threonine 71 coordinates Mg(2+). Lysine 79 carries the post-translational modification N6-acetyllysine. N6-acetyllysine; alternate is present on lysine 88. Lysine 88 carries the N6-succinyllysine; alternate modification. The interval 105–109 (GITIN) is G2. Positions 126-129 (DCPG) are G3. Positions 181, 184, 219, 220, and 221 each coordinate GTP. A G4 region spans residues 181-184 (NKAD). A G5 region spans residues 219-221 (SAL). N6-succinyllysine is present on lysine 234. Lysine 256 is subject to N6-acetyllysine. At threonine 278 the chain carries Phosphothreonine. An N6-succinyllysine modification is found at lysine 286. Phosphoserine is present on serine 312. N6-acetyllysine is present on residues lysine 361 and lysine 418.

It belongs to the TRAFAC class translation factor GTPase superfamily. Classic translation factor GTPase family. EF-Tu/EF-1A subfamily. As to quaternary structure, interacts with NLRX1. Interacts with ATG16L1.

It is found in the mitochondrion. The catalysed reaction is GTP + H2O = GDP + phosphate + H(+). Functionally, GTP hydrolase that promotes the GTP-dependent binding of aminoacyl-tRNA to the A-site of ribosomes during protein biosynthesis. Also plays a role in the regulation of autophagy and innate immunity. Recruits ATG5-ATG12 and NLRX1 at mitochondria and serves as a checkpoint of the RIGI-MAVS pathway. In turn, inhibits RLR-mediated type I interferon while promoting autophagy. This Mus musculus (Mouse) protein is Elongation factor Tu, mitochondrial (Tufm).